The sequence spans 310 residues: Nucleotide-binding protein BAD_0837 (310 aa).

31 to 38 (GMSGAGRS) is an ATP binding site. 82–85 (DVRS) serves as a coordination point for GTP.

Belongs to the RapZ-like family.

Functionally, displays ATPase and GTPase activities. The polypeptide is Nucleotide-binding protein BAD_0837 (Bifidobacterium adolescentis (strain ATCC 15703 / DSM 20083 / NCTC 11814 / E194a)).